The following is a 259-amino-acid chain: Dickkopf-related protein 2 (259 aa).

The first 33 residues, 1–33 (MAALMRSKDSSCCLLLLAAVLMVESSQIGSSRA), serve as a signal peptide directing secretion. N-linked (GlcNAc...) asparagine glycosylation occurs at Asn-52. The DKK-type Cys-1 stretch occupies residues 78-127 (CSSDKECEVGRYCHSPHQGSSACMVCRRKKKRCHRDGMCCPSTRCNNGIC). 5 disulfides stabilise this stretch: Cys-183–Cys-195, Cys-189–Cys-204, Cys-194–Cys-231, Cys-214–Cys-239, and Cys-233–Cys-256. The DKK-type Cys-2 stretch occupies residues 183 to 256 (CLRSSDCIEG…YSSKARLHVC (74 aa)).

Belongs to the dickkopf family. As to quaternary structure, interacts with LRP5 and LRP6. May be proteolytically processed by a furin-like protease. In terms of tissue distribution, expressed in heart, brain, skeletal muscle and lung.

It is found in the secreted. In terms of biological role, antagonizes canonical Wnt signaling by inhibiting LRP5/6 interaction with Wnt and by forming a ternary complex with the transmembrane protein KREMEN that promotes internalization of LRP5/6. DKKs play an important role in vertebrate development, where they locally inhibit Wnt regulated processes such as antero-posterior axial patterning, limb development, somitogenesis and eye formation. In the adult, Dkks are implicated in bone formation and bone disease, cancer and Alzheimer disease. The protein is Dickkopf-related protein 2 (DKK2) of Homo sapiens (Human).